We begin with the raw amino-acid sequence, 369 residues long: Flagellar P-ring protein (369 aa).

An N-terminal signal peptide occupies residues 1 to 23; that stretch reads MRIASFFTVLLTLLTLNITPASA.

This sequence belongs to the FlgI family. The basal body constitutes a major portion of the flagellar organelle and consists of four rings (L,P,S, and M) mounted on a central rod.

It localises to the periplasm. The protein resides in the bacterial flagellum basal body. Functionally, assembles around the rod to form the L-ring and probably protects the motor/basal body from shearing forces during rotation. This chain is Flagellar P-ring protein, found in Pectobacterium atrosepticum (strain SCRI 1043 / ATCC BAA-672) (Erwinia carotovora subsp. atroseptica).